A 394-amino-acid chain; its full sequence is Deoxyguanosinetriphosphate triphosphohydrolase-like protein (394 aa).

A disordered region spans residues Met1–Phe36. Positions Phe25 to Phe36 are enriched in basic and acidic residues. Positions Arg70–Asn210 constitute an HD domain.

This sequence belongs to the dGTPase family. Type 2 subfamily.

The protein is Deoxyguanosinetriphosphate triphosphohydrolase-like protein of Caulobacter vibrioides (strain ATCC 19089 / CIP 103742 / CB 15) (Caulobacter crescentus).